Reading from the N-terminus, the 631-residue chain is tRNA uridine 5-carboxymethylaminomethyl modification enzyme MnmG (631 aa).

FAD contacts are provided by residues 13–18, Val-125, and Ser-180; that span reads GGGHAG. An NAD(+)-binding site is contributed by 273-287; the sequence is GPRYCPSIEDKVMRF. Residue Gln-370 participates in FAD binding.

It belongs to the MnmG family. In terms of assembly, homodimer. Heterotetramer of two MnmE and two MnmG subunits. Requires FAD as cofactor.

It localises to the cytoplasm. In terms of biological role, NAD-binding protein involved in the addition of a carboxymethylaminomethyl (cmnm) group at the wobble position (U34) of certain tRNAs, forming tRNA-cmnm(5)s(2)U34. The chain is tRNA uridine 5-carboxymethylaminomethyl modification enzyme MnmG from Vibrio atlanticus (strain LGP32) (Vibrio splendidus (strain Mel32)).